Consider the following 256-residue polypeptide: Enolase-phosphatase E1 (256 aa).

The Mg(2+) site is built by Asp14 and Glu16. Residues 142 to 143 (SS) and Lys176 each bind substrate. Asp201 lines the Mg(2+) pocket.

Belongs to the HAD-like hydrolase superfamily. MasA/MtnC family. As to quaternary structure, monomer. The cofactor is Mg(2+).

Its subcellular location is the cytoplasm. The protein localises to the nucleus. The enzyme catalyses 5-methylsulfanyl-2,3-dioxopentyl phosphate + H2O = 1,2-dihydroxy-5-(methylsulfanyl)pent-1-en-3-one + phosphate. The protein operates within amino-acid biosynthesis; L-methionine biosynthesis via salvage pathway; L-methionine from S-methyl-5-thio-alpha-D-ribose 1-phosphate: step 3/6. It functions in the pathway amino-acid biosynthesis; L-methionine biosynthesis via salvage pathway; L-methionine from S-methyl-5-thio-alpha-D-ribose 1-phosphate: step 4/6. Functionally, bifunctional enzyme that catalyzes the enolization of 2,3-diketo-5-methylthiopentyl-1-phosphate (DK-MTP-1-P) into the intermediate 2-hydroxy-3-keto-5-methylthiopentenyl-1-phosphate (HK-MTPenyl-1-P), which is then dephosphorylated to form the acireductone 1,2-dihydroxy-3-keto-5-methylthiopentene (DHK-MTPene). The chain is Enolase-phosphatase E1 from Drosophila erecta (Fruit fly).